A 404-amino-acid polypeptide reads, in one-letter code: Cysteine desulfurase IscS (404 aa).

Pyridoxal 5'-phosphate contacts are provided by residues 75 to 76 (AT), Asn155, Gln183, and 203 to 205 (SAH). Lys206 is modified (N6-(pyridoxal phosphate)lysine). Thr243 serves as a coordination point for pyridoxal 5'-phosphate. The Cysteine persulfide intermediate role is filled by Cys328. Cys328 contacts [2Fe-2S] cluster.

This sequence belongs to the class-V pyridoxal-phosphate-dependent aminotransferase family. NifS/IscS subfamily. In terms of assembly, homodimer. Forms a heterotetramer with IscU, interacts with other sulfur acceptors. Requires pyridoxal 5'-phosphate as cofactor.

The protein localises to the cytoplasm. It carries out the reaction (sulfur carrier)-H + L-cysteine = (sulfur carrier)-SH + L-alanine. It participates in cofactor biosynthesis; iron-sulfur cluster biosynthesis. In terms of biological role, master enzyme that delivers sulfur to a number of partners involved in Fe-S cluster assembly, tRNA modification or cofactor biosynthesis. Catalyzes the removal of elemental sulfur atoms from cysteine to produce alanine. Functions as a sulfur delivery protein for Fe-S cluster synthesis onto IscU, an Fe-S scaffold assembly protein, as well as other S acceptor proteins. The polypeptide is Cysteine desulfurase IscS (Buchnera aphidicola subsp. Schizaphis graminum (strain Sg)).